Here is a 205-residue protein sequence, read N- to C-terminus: Probable GTP-binding protein EngB (205 aa).

The EngB-type G domain occupies 29–203; the sequence is QGAEIAFIGR…KAVLSQWFRS (175 aa). Residues 37–44, 64–68, 82–85, 149–152, and 182–184 each bind GTP; these read GRSNAGKS, GRTQM, DLPG, TKSD, and FSS. 2 residues coordinate Mg(2+): Ser-44 and Thr-66.

The protein belongs to the TRAFAC class TrmE-Era-EngA-EngB-Septin-like GTPase superfamily. EngB GTPase family. The cofactor is Mg(2+).

Necessary for normal cell division and for the maintenance of normal septation. The protein is Probable GTP-binding protein EngB of Coxiella burnetii (strain RSA 493 / Nine Mile phase I).